Reading from the N-terminus, the 883-residue chain is Valine--tRNA ligase (883 aa).

The 'HIGH' region motif lies at 46–56; it reads PNVTGKLHLGH. The 'KMSKS' region signature appears at 520 to 524; that stretch reads KMSKS. Residue Lys523 participates in ATP binding. Residues 809 to 844 adopt a coiled-coil conformation; sequence LADLLNVEEELARLEKELAKWQKELDMVGKKLSNER.

It belongs to the class-I aminoacyl-tRNA synthetase family. ValS type 1 subfamily. As to quaternary structure, monomer.

The protein localises to the cytoplasm. It catalyses the reaction tRNA(Val) + L-valine + ATP = L-valyl-tRNA(Val) + AMP + diphosphate. In terms of biological role, catalyzes the attachment of valine to tRNA(Val). As ValRS can inadvertently accommodate and process structurally similar amino acids such as threonine, to avoid such errors, it has a 'posttransfer' editing activity that hydrolyzes mischarged Thr-tRNA(Val) in a tRNA-dependent manner. The protein is Valine--tRNA ligase of Streptococcus thermophilus (strain CNRZ 1066).